The sequence spans 363 residues: Pyrimidine monooxygenase RutA (363 aa).

FMN-binding positions include 49-50, Asn-115, Glu-124, 140-141, and Ser-190; these read IK and RY.

This sequence belongs to the NtaA/SnaA/DszA monooxygenase family. RutA subfamily.

The catalysed reaction is uracil + FMNH2 + NADH + O2 = (Z)-3-ureidoacrylate + FMN + NAD(+) + H2O + H(+). It carries out the reaction thymine + FMNH2 + NADH + O2 = (Z)-2-methylureidoacrylate + FMN + NAD(+) + H2O + H(+). Catalyzes the pyrimidine ring opening between N-3 and C-4 by an unusual flavin hydroperoxide-catalyzed mechanism, adding oxygen atoms in the process to yield ureidoacrylate peracid, that immediately reacts with FMN forming ureidoacrylate and FMN-N(5)-oxide. The FMN-N(5)-oxide reacts spontaneously with NADH to produce FMN. Requires the flavin reductase RutF to regenerate FMN in vivo. This chain is Pyrimidine monooxygenase RutA, found in Rhizobium rhizogenes (strain K84 / ATCC BAA-868) (Agrobacterium radiobacter).